Consider the following 454-residue polypeptide: UDP-N-acetylmuramate--L-alanine ligase (454 aa).

113–119 lines the ATP pocket; sequence GSHGKTT.

Belongs to the MurCDEF family.

It localises to the cytoplasm. It carries out the reaction UDP-N-acetyl-alpha-D-muramate + L-alanine + ATP = UDP-N-acetyl-alpha-D-muramoyl-L-alanine + ADP + phosphate + H(+). It participates in cell wall biogenesis; peptidoglycan biosynthesis. Its function is as follows. Cell wall formation. The polypeptide is UDP-N-acetylmuramate--L-alanine ligase (Aquifex aeolicus (strain VF5)).